The sequence spans 1236 residues: Complement factor H (1236 aa).

A signal peptide spans 1-18 (MRFPAKIVWLVLWTVCVA). 20 Sushi domains span residues 19–82 (EDCK…ICRK), 83–143 (KPCA…ICEV), 144–207 (VKCL…KCVE), 208–264 (IFCK…TCIE), 265–322 (ITCD…RCAW), 325–383 (CSYP…EEPC), 385–442 (RQCI…RCIR), 444–505 (KTCS…VCIK), 507–562 (CDRP…KAAC), 565–623 (RECS…TCKV), 627–685 (KSCA…VCIE), 688–745 (RTCG…QCIA), 750–804 (RKCK…DCNE), 809–866 (QLCP…RCIE), 868–936 (IGCS…QCVG), 937–994 (LPCG…DCIS), 995–1053 (TNCV…ACRD), 1054–1111 (VSCG…QCKD), 1114–1172 (GKCG…KCLE), and 1173–1235 (ACVI…YPRC). 40 cysteine pairs are disulfide-bonded: Cys-21–Cys-66, Cys-52–Cys-80, Cys-85–Cys-129, Cys-114–Cys-141, Cys-146–Cys-192, Cys-178–Cys-205, Cys-210–Cys-251, Cys-237–Cys-262, Cys-267–Cys-309, Cys-294–Cys-320, Cys-325–Cys-372, Cys-355–Cys-383, Cys-387–Cys-429, Cys-414–Cys-440, Cys-446–Cys-492, Cys-475–Cys-503, Cys-507–Cys-551, Cys-534–Cys-562, Cys-567–Cys-609, Cys-595–Cys-621, Cys-629–Cys-672, Cys-658–Cys-683, Cys-690–Cys-732, Cys-718–Cys-743, Cys-752–Cys-791, Cys-780–Cys-802, Cys-811–Cys-853, Cys-839–Cys-864, Cys-870–Cys-923, Cys-909–Cys-934, Cys-939–Cys-981, Cys-967–Cys-992, Cys-997–Cys-1040, Cys-1026–Cys-1051, Cys-1056–Cys-1098, Cys-1084–Cys-1109, Cys-1116–Cys-1159, Cys-1145–Cys-1170, Cys-1174–Cys-1225, and Cys-1208–Cys-1235. Sulfotyrosine occurs at positions 168 and 170. A sulfotyrosine mark is found at Tyr-465 and Tyr-473. A sulfotyrosine mark is found at Tyr-575, Tyr-579, and Tyr-585. Asn-775 carries an N-linked (GlcNAc...) asparagine glycan. N-linked (GlcNAc...) asparagine glycosylation is present at Asn-1100.

Homodimer. Also forms homooligomers. Interacts with complement protein C3b; this interaction inhibits complement activation. Interacts with complement protein C3d. Interacts with CR3/ITGAM; this interaction mediates adhesion of neutrophils to pathogens leading to pathogen clearance. Post-translationally, sulfated on tyrosine residues. In terms of tissue distribution, CFH is one of the most abundant complement components in blood where the liver is the major source of CFH protein in vivo. in addition, CFH is secreted by additional cell types including monocytes, fibroblasts, or endothelial cells.

The protein localises to the secreted. Its function is as follows. Glycoprotein that plays an essential role in maintaining a well-balanced immune response by modulating complement activation. Acts as a soluble inhibitor of complement, where its binding to self markers such as glycan structures prevents complement activation and amplification on cell surfaces. Accelerates the decay of the complement alternative pathway (AP) C3 convertase C3bBb, thus preventing local formation of more C3b, the central player of the complement amplification loop. As a cofactor of the serine protease factor I, CFH also regulates proteolytic degradation of already-deposited C3b. In addition, mediates several cellular responses through interaction with specific receptors. For example, interacts with CR3/ITGAM receptor and thereby mediates the adhesion of human neutrophils to different pathogens. In turn, these pathogens are phagocytosed and destroyed. This chain is Complement factor H (CFH), found in Bos taurus (Bovine).